A 381-amino-acid polypeptide reads, in one-letter code: tRNA pseudouridine synthase D (381 aa).

Residue Asp-81 is the Nucleophile of the active site. The TRUD domain maps to 160 to 335 (GMPNYFGSQR…TLGSRRFFWV (176 aa)).

Belongs to the pseudouridine synthase TruD family.

It catalyses the reaction uridine(13) in tRNA = pseudouridine(13) in tRNA. In terms of biological role, responsible for synthesis of pseudouridine from uracil-13 in transfer RNAs. This chain is tRNA pseudouridine synthase D, found in Helicobacter pylori (strain G27).